The chain runs to 109 residues: Ubiquitin-related modifier 1 homolog (109 aa).

Residue Gly-109 is modified to 1-thioglycine. A Glycyl lysine isopeptide (Gly-Lys) (interchain with K-? in acceptor proteins) cross-link involves residue Gly-109.

Belongs to the URM1 family. Post-translationally, C-terminal thiocarboxylation occurs in 2 steps, it is first acyl-adenylated (-COAMP) via the hesA/moeB/thiF part of the MOCS3 homolog, then thiocarboxylated (-COSH) via the rhodanese domain of the MOCS3 homolog.

Its subcellular location is the cytoplasm. The protein operates within tRNA modification; 5-methoxycarbonylmethyl-2-thiouridine-tRNA biosynthesis. Functionally, acts as a sulfur carrier required for 2-thiolation of mcm(5)S(2)U at tRNA wobble positions of cytosolic tRNA(Lys), tRNA(Glu) and tRNA(Gln). Serves as sulfur donor in tRNA 2-thiolation reaction by being thiocarboxylated (-COSH) at its C-terminus by MOCS3. The sulfur is then transferred to tRNA to form 2-thiolation of mcm(5)S(2)U. Also acts as a ubiquitin-like protein (UBL) that is covalently conjugated via an isopeptide bond to lysine residues of target proteins. The thiocarboxylated form serves as substrate for conjugation and oxidative stress specifically induces the formation of UBL-protein conjugates. In Anopheles gambiae (African malaria mosquito), this protein is Ubiquitin-related modifier 1 homolog.